A 297-amino-acid polypeptide reads, in one-letter code: Homoserine kinase (297 aa).

82–92 contributes to the ATP binding site; sequence PVSRGLGSSAA.

This sequence belongs to the GHMP kinase family. Homoserine kinase subfamily.

It is found in the cytoplasm. It catalyses the reaction L-homoserine + ATP = O-phospho-L-homoserine + ADP + H(+). It functions in the pathway amino-acid biosynthesis; L-threonine biosynthesis; L-threonine from L-aspartate: step 4/5. Its function is as follows. Catalyzes the ATP-dependent phosphorylation of L-homoserine to L-homoserine phosphate. This is Homoserine kinase from Clostridium botulinum (strain 657 / Type Ba4).